We begin with the raw amino-acid sequence, 99 residues long: Virion membrane protein OPG135 (99 aa).

The signal sequence occupies residues 1–22; it reads MSCYTAILKSVGGLALFQVANG. Residues 23–45 lie on the Intravirion side of the membrane; sequence AIDLCRHFFMYFCEQKLRPNSFW. The helical transmembrane segment at 46 to 66 threads the bilayer; the sequence is FVVVRAIASMIMYLVLGIALL. Residues 67–83 lie on the Virion surface side of the membrane; that stretch reads YISEQDDKKNTNNDGSN. The span at 73–89 shows a compositional bias: basic and acidic residues; the sequence is DKKNTNNDGSNNDKRNE. Residues 73-99 form a disordered region; it reads DKKNTNNDGSNNDKRNESSINSNSSPK. N-linked (GlcNAc...) asparagine; by host glycosylation is present at N88. Polar residues predominate over residues 90-99; the sequence is SSINSNSSPK.

Belongs to the oerthopoxvirus OPG135 family.

Its subcellular location is the virion membrane. It is found in the host cytoplasm. Envelope protein. Required for an early step in virion morphogenesis. The sequence is that of Virion membrane protein OPG135 (OPG135) from Homo sapiens (Human).